The primary structure comprises 393 residues: Outer membrane protein assembly factor BamB (393 aa).

Residues 1–19 (MQLRKTLLVGLVSVALLSG) form the signal peptide. Cysteine 20 is lipidated: N-palmitoyl cysteine. Cysteine 20 carries S-diacylglycerol cysteine lipidation.

It belongs to the BamB family. In terms of assembly, part of the Bam complex, which is composed of the outer membrane protein BamA, and four lipoproteins BamB, BamC, BamD and BamE.

It localises to the cell outer membrane. Functionally, part of the outer membrane protein assembly complex, which is involved in assembly and insertion of beta-barrel proteins into the outer membrane. This chain is Outer membrane protein assembly factor BamB, found in Yersinia pestis.